The sequence spans 290 residues: Type II restriction enzyme MjaIII (290 aa).

This sequence belongs to the DpnII type II restriction endonuclease family.

It carries out the reaction Endonucleolytic cleavage of DNA to give specific double-stranded fragments with terminal 5'-phosphates.. In terms of biological role, a P subtype restriction enzyme that recognizes the double-stranded sequence 5'-GATC-3'; the cleavage site is unknown. This Methanocaldococcus jannaschii (strain ATCC 43067 / DSM 2661 / JAL-1 / JCM 10045 / NBRC 100440) (Methanococcus jannaschii) protein is Type II restriction enzyme MjaIII (mjaIIIR).